Consider the following 428-residue polypeptide: Serine--tRNA ligase (428 aa).

Position 235–237 (235–237) interacts with L-serine; sequence TAE. Residue 266–268 participates in ATP binding; it reads RSE. Glu-289 contributes to the L-serine binding site. 353 to 356 contributes to the ATP binding site; the sequence is EISS. Ser-389 provides a ligand contact to L-serine.

The protein belongs to the class-II aminoacyl-tRNA synthetase family. Type-1 seryl-tRNA synthetase subfamily. In terms of assembly, homodimer. The tRNA molecule binds across the dimer.

It is found in the cytoplasm. It catalyses the reaction tRNA(Ser) + L-serine + ATP = L-seryl-tRNA(Ser) + AMP + diphosphate + H(+). The catalysed reaction is tRNA(Sec) + L-serine + ATP = L-seryl-tRNA(Sec) + AMP + diphosphate + H(+). The protein operates within aminoacyl-tRNA biosynthesis; selenocysteinyl-tRNA(Sec) biosynthesis; L-seryl-tRNA(Sec) from L-serine and tRNA(Sec): step 1/1. Its function is as follows. Catalyzes the attachment of serine to tRNA(Ser). Is also able to aminoacylate tRNA(Sec) with serine, to form the misacylated tRNA L-seryl-tRNA(Sec), which will be further converted into selenocysteinyl-tRNA(Sec). This Shewanella woodyi (strain ATCC 51908 / MS32) protein is Serine--tRNA ligase.